Reading from the N-terminus, the 470-residue chain is Argininosuccinate lyase (470 aa).

Belongs to the lyase 1 family. Argininosuccinate lyase subfamily.

The protein localises to the cytoplasm. The enzyme catalyses 2-(N(omega)-L-arginino)succinate = fumarate + L-arginine. The protein operates within amino-acid biosynthesis; L-arginine biosynthesis; L-arginine from L-ornithine and carbamoyl phosphate: step 3/3. This is Argininosuccinate lyase from Mycolicibacterium vanbaalenii (strain DSM 7251 / JCM 13017 / BCRC 16820 / KCTC 9966 / NRRL B-24157 / PYR-1) (Mycobacterium vanbaalenii).